The sequence spans 442 residues: Betaine reductase complex component B subunit alpha (442 aa).

As to quaternary structure, heterotetramer of two alpha and two beta subunits. Component of the betaine reductase complex, together with components A and C. PB is substrate specific.

It carries out the reaction acetyl phosphate + trimethylamine + [thioredoxin]-disulfide + H2O = glycine betaine + [thioredoxin]-dithiol + phosphate + H(+). Its function is as follows. In the first step of betaine reductase, the substrate is bound to component PB via a Schiff base intermediate. Then the PB-activated substrate is nucleophilically attacked by the selenol anion of component PA to transform it to a carboxymethylated selenoether and the respective amine. By action of component PC, acetyl phosphate is formed, leaving component PA in its oxidized state. Finally component PA becomes reduced by the thioredoxin system to start a new catalytic cycle of reductive deamination. This chain is Betaine reductase complex component B subunit alpha (grdI), found in Peptoclostridium acidaminophilum (Eubacterium acidaminophilum).